A 438-amino-acid polypeptide reads, in one-letter code: CBL-interacting protein kinase 32 (438 aa).

The Protein kinase domain occupies Tyr-13–Phe-268. ATP contacts are provided by residues Ile-19–Val-27 and Lys-42. Asp-136 (proton acceptor) is an active-site residue. The tract at residues Asp-154 to Glu-183 is activation loop. Residues Glu-305–Asp-329 enclose the NAF domain. The segment at Lys-335–Val-364 is PPI.

This sequence belongs to the protein kinase superfamily. CAMK Ser/Thr protein kinase family. SNF1 subfamily. The cofactor is Mn(2+).

The catalysed reaction is L-seryl-[protein] + ATP = O-phospho-L-seryl-[protein] + ADP + H(+). It carries out the reaction L-threonyl-[protein] + ATP = O-phospho-L-threonyl-[protein] + ADP + H(+). In terms of biological role, CIPK serine-threonine protein kinases interact with CBL proteins. Binding of a CBL protein to the regulatory NAF domain of CIPK protein lead to the activation of the kinase in a calcium-dependent manner. The chain is CBL-interacting protein kinase 32 (CIPK32) from Oryza sativa subsp. japonica (Rice).